The chain runs to 267 residues: Phosphatidylcholine synthase (267 aa).

Over 1-42 (MILWRIVRPGAAMAYVQTGLVLIAEAMDTQQDSLKPRPAMRA) the chain is Cytoplasmic. A helical transmembrane segment spans residues 43–63 (AAFSVHVFTAFGAAIALLAML). Over 64-69 (EAVREH) the chain is Periplasmic. Residues 70–90 (WAAMFQWLGVALIIDAIDGPI) form a helical membrane-spanning segment. At 91–102 (ARRLDVKNVQPN) the chain is on the cytoplasmic side. Residues 103 to 123 (WSGDVLDLVVDFVTYVFVPAY) traverse the membrane as a helical segment. Residue alanine 124 is a topological domain, periplasmic. Residues 125–145 (IVASGLLLPVAAPLLGVAIIV) traverse the membrane as a helical segment. At 146-162 (TSALYFADLRMKADDNH) the chain is on the cytoplasmic side. A helical membrane pass occupies residues 163–183 (FRGFPALWNAAAFYLFLLHWP). A topological domain (periplasmic) is located at residue proline 184. A helical membrane pass occupies residues 185 to 205 (LWSTLLVAALVVLTFVPFHVL). Topologically, residues 206–215 (HPVRVVRLRW) are cytoplasmic. A helical transmembrane segment spans residues 216–236 (LTMSLIGIWAVLSLYTLDMDF). At 237-239 (RVG) the chain is on the periplasmic side. Residues 240 to 260 (PGVTLALCAIALWISFSDALI) form a helical membrane-spanning segment. Residues 261–267 (RFARSFA) lie on the Cytoplasmic side of the membrane.

The protein belongs to the CDP-alcohol phosphatidyltransferase class-I family. Requires Mn(2+) as cofactor.

The protein resides in the cell inner membrane. The enzyme catalyses a CDP-1,2-diacyl-sn-glycerol + choline = a 1,2-diacyl-sn-glycero-3-phosphocholine + CMP + H(+). Its function is as follows. Condenses choline with CDP-diglyceride to produce phosphatidylcholine and CMP. The chain is Phosphatidylcholine synthase from Bradyrhizobium diazoefficiens (strain JCM 10833 / BCRC 13528 / IAM 13628 / NBRC 14792 / USDA 110).